Reading from the N-terminus, the 404-residue chain is Triose phosphate/phosphate translocator, chloroplastic (404 aa).

The transit peptide at 1–74 (MESRVLSRTT…GPVCSRREKT (74 aa)) directs the protein to the chloroplast. Residues 75-98 (AVQPCRAASGSSGEAKTGFLEKYP) are Chloroplast intermembrane-facing. Residues 99 to 119 (ALVTGSFFFMWYFLNVIFNIL) traverse the membrane as a helical segment. Residues 120 to 131 (NKKIYNYFPYPY) are Lumenal-facing. The helical transmembrane segment at 132-152 (FVSVIHLFVGVVYCLASWSVG) threads the bilayer. At 153 to 209 (LPKRAPMDSKLLKLLIPVAVCHAIGHVTSNVSFAAVAVSFTHTIKALEPFFNAAASQ) the chain is on the chloroplast intermembrane side. Residues 210 to 230 (FVLGQSIPITLWLSLAPVVIG) traverse the membrane as a helical segment. At 231–274 (VSMASLTELSFNWLGFISAMISNVSFTYRSLYSKKAMTDMDSTN) the chain is on the lumenal side. The chain crosses the membrane as a helical span at residues 275–294 (IYAYISIIALFVCLPPAIIV). The Chloroplast intermembrane portion of the chain corresponds to 295 to 372 (EGPQLMKHGF…IAFGNKISTQ (78 aa)). Residues 373–393 (TAIGTSIAIAGVALYSLIKAK) form a helical membrane-spanning segment. The Lumenal portion of the chain corresponds to 394-404 (MEEEKRQMKST).

The protein belongs to the TPT transporter family. TPT (TC 2.A.7.9) subfamily. In terms of processing, the N-terminus is blocked.

The protein localises to the plastid. It localises to the chloroplast membrane. Its function is as follows. Mediates the export of fixed carbons from the chloroplasts into the cytosol in the form of triose phosphates. The protein is Triose phosphate/phosphate translocator, chloroplastic of Spinacia oleracea (Spinach).